A 421-amino-acid chain; its full sequence is Histidine--tRNA ligase (421 aa).

This sequence belongs to the class-II aminoacyl-tRNA synthetase family. Homodimer.

It is found in the cytoplasm. The catalysed reaction is tRNA(His) + L-histidine + ATP = L-histidyl-tRNA(His) + AMP + diphosphate + H(+). This Fervidobacterium nodosum (strain ATCC 35602 / DSM 5306 / Rt17-B1) protein is Histidine--tRNA ligase.